A 453-amino-acid polypeptide reads, in one-letter code: 5-hydroxytryptamine receptor 1 (453 aa).

The Extracellular segment spans residues 1-36; that stretch reads MKSLKSSTHDVPHPEHVVWAPPAYDEQHHLFFSHGT. Residues 37 to 57 traverse the membrane as a helical segment; sequence VLIGIVGSLIITVAVVGNVLV. Topologically, residues 58 to 74 are cytoplasmic; sequence CLAIFTEPILSHSKSNF. Residues 75 to 94 form a helical membrane-spanning segment; the sequence is FIVSLAVADLLLALLVMTFA. The Extracellular segment spans residues 95–110; the sequence is LVNDMYGYWLFGETFC. A disulfide bridge links cysteine 110 with cysteine 225. Residues 111–133 form a helical membrane-spanning segment; sequence FIWMSADVMCETASIFSICVISY. Topologically, residues 134–153 are cytoplasmic; sequence DRLKQVQKPLHYEEFMTTTR. A helical membrane pass occupies residues 154 to 175; the sequence is ALLIIACLWICSFVLSFVPIFL. The Extracellular segment spans residues 176–223; the sequence is EWHELSVEEIKAIFKDNKTEKEKALEAHNFSSALNQTLGDNQKSNAKH. The helical transmembrane segment at 224-244 threads the bilayer; it reads VCLFDVHFTYSVIYSFICFYV. Residues 245 to 301 lie on the Cytoplasmic side of the membrane; the sequence is PCTLMLTNYLRLFLIAQTHQVRIRSLQMTNPPQLRGQGASSYRNQGTQGSKAARTLT. The chain crosses the membrane as a helical span at residues 302 to 322; the sequence is IITGTFLACWLPFFIINPIAA. Over 323 to 331 the chain is Extracellular; the sequence is ADEHLIPLE. Residues 332–352 traverse the membrane as a helical segment; sequence CFMVTIWLGYFNSSVNPIIYG. Topologically, residues 353–453 are cytoplasmic; that stretch reads TSNSKFRAAF…VFDSDTAFSS (101 aa). The interval 397–428 is disordered; it reads DLSSSEHPSDACDTGRGKNSKGGDCATADPTK. The segment covering 403–412 has biased composition (basic and acidic residues); that stretch reads HPSDACDTGR.

Belongs to the G-protein coupled receptor 1 family. In terms of tissue distribution, reproductive system.

It is found in the cell membrane. In terms of biological role, this is one of the several different receptors for 5-hydroxytryptamine (serotonin). 5-HT plays important roles in various behavioral and physiological processes in aplysia. These include feeding, locomotion, circadian rhythm, learning and memory, synaptic plasticity, and synaptic growth. This receptor is mediated by G proteins that stimulate phospholipase C. In Aplysia californica (California sea hare), this protein is 5-hydroxytryptamine receptor 1 (5HTB1).